The primary structure comprises 243 residues: Eukaryotic translation initiation factor 4E-2 (243 aa).

It belongs to the eukaryotic initiation factor 4E family. As to quaternary structure, eIF4F is a multi-subunit complex, the composition of which varies with external and internal environmental conditions. It is composed of at least eIF4A, eIF4E and eIF4G. eIF4E is also known to interact with other partners.

Recognizes and binds the 7-methylguanosine-containing mRNA cap during an early step in the initiation of protein synthesis and facilitates ribosome binding by inducing the unwinding of the mRNAs secondary structures. The protein is Eukaryotic translation initiation factor 4E-2 (tif452) of Schizosaccharomyces pombe (strain 972 / ATCC 24843) (Fission yeast).